The primary structure comprises 159 residues: Probable NADH dehydrogenase [ubiquinone] 1 alpha subcomplex subunit 12 (159 aa).

This sequence belongs to the complex I NDUFA12 subunit family. As to quaternary structure, complex I is composed of at least 49 different subunits.

The protein resides in the mitochondrion inner membrane. Functionally, accessory subunit of the mitochondrial membrane respiratory chain NADH dehydrogenase (Complex I), that is believed not to be involved in catalysis. Complex I functions in the transfer of electrons from NADH to the respiratory chain. The immediate electron acceptor for the enzyme is believed to be ubiquinone. The polypeptide is Probable NADH dehydrogenase [ubiquinone] 1 alpha subcomplex subunit 12 (Arabidopsis thaliana (Mouse-ear cress)).